The chain runs to 308 residues: Peptidyl-prolyl cis-trans isomerase CYP8 (308 aa).

The region spanning 56–215 is the PPIase cyclophilin-type domain; it reads FTDPESSEEA…QPITIGYISS (160 aa).

The enzyme catalyses [protein]-peptidylproline (omega=180) = [protein]-peptidylproline (omega=0). In terms of biological role, PPIases accelerate the folding of proteins. It catalyzes the cis-trans isomerization of proline imidic peptide bonds in oligopeptides. The chain is Peptidyl-prolyl cis-trans isomerase CYP8 (CPR8) from Saccharomyces cerevisiae (strain ATCC 204508 / S288c) (Baker's yeast).